The following is a 244-amino-acid chain: tRNA (guanine-N(7)-)-methyltransferase (244 aa).

4 residues coordinate S-adenosyl-L-methionine: E75, E100, D127, and D150. D150 is an active-site residue. Residues K154, D186, and 223 to 226 each bind substrate; that span reads TRFE.

This sequence belongs to the class I-like SAM-binding methyltransferase superfamily. TrmB family.

The enzyme catalyses guanosine(46) in tRNA + S-adenosyl-L-methionine = N(7)-methylguanosine(46) in tRNA + S-adenosyl-L-homocysteine. It participates in tRNA modification; N(7)-methylguanine-tRNA biosynthesis. Catalyzes the formation of N(7)-methylguanine at position 46 (m7G46) in tRNA. The chain is tRNA (guanine-N(7)-)-methyltransferase from Xylella fastidiosa (strain M23).